Here is a 402-residue protein sequence, read N- to C-terminus: UPF0597 protein THA_1286 (402 aa).

This sequence belongs to the UPF0597 family.

This Thermosipho africanus (strain TCF52B) protein is UPF0597 protein THA_1286.